Consider the following 866-residue polypeptide: MSSLVLGLHEIEKTQLSLVGGKGLHLGELSKIQGIQVPEGFCVTTVGYQKAIEQNETLQVLLDQLTMLKVEDRDQIGNISRKIRQIIMEVDIPSDVVKAVAQYLSQFGEEHAYAVRSSATAEDLPHASFAGQQDTYLNITGVDAILQHISKCWASLFTDRAVIYRMQNGFDHSQVYLSVIVQRMVFPQASGILFTADPITSNRKVLSIDAGFGLGEALVSGLVSADCFKVQDGQIIDKRIATKKMAIYGRKEGGTETQQIDSDQQKAQTLTDEQILQLARIGRQIEAHFGQPQDIEWCLARDTFYIVQSRPITTLFPIPEASDQENHVYISVGHQQMMTDPIKPLGLSFFLLTTVAPMRKAGGRLFVDVTHHLASPDSREVFLKGMGQHDQLLKDALMTIIKRRDFIKSIPNDKTAPNPSRGNADMPAQVENDPTIVSDLIESSQTSIEELKQNIQTKSGSDLFRFILEDIQELKKILFNPKSSVLIRTAMNASLWINEKMNEWLGEKNAADTLSQSVPHNITSEMGLALLDVADVIRPYPEVIDYLQHVKDDNFLDELAKFDGGSKTRDAIYDYLSKYGMRCTGEIDITRTRWSEKPTTLVPMILNNIKNFEPNVGHRKFEQGRQEALKKEQELLDRLKQLPDGEQKAKETKRAIDIIRNFSGFREYPKYGMVNRYFVYKQALLKEAEQLIEAGVIHEKEDIYYLTFEELHEVVRTHKLDYQIISTRKDEYTLYEKLSPPRVITSDGEIVTGEYKRENLPAGAIVGLPVSSGVIEGRARVILNMEDADLEDGDILVTSFTDPSWTPLFVSIKGLVTEVGGLMTHGAVIAREYGLPAVVGVENAAKLIKDGQRIRVHGTEGYIEIF.

The segment at 1 to 313 (MSSLVLGLHE…FYIVQSRPIT (313 aa)) is ATP-binding. Lys-22, Arg-116, Gly-131, Thr-135, Gln-182, Glu-296, Gln-308, and Arg-310 together coordinate ATP. A rifampicin-binding region spans residues 326–754 (NHVYISVGHQ…TSDGEIVTGE (429 aa)). The interval 410-429 (IPNDKTAPNPSRGNADMPAQ) is disordered. The tract at residues 767-865 (GLPVSSGVIE…VHGTEGYIEI (99 aa)) is swivel phosphohistidine. The Tele-phosphohistidine intermediate role is filled by His-825.

This sequence belongs to the rifampicin phosphotransferase family.

The enzyme catalyses rifampicin + ATP + H2O = 21-phosphorifampicin + AMP + phosphate + 2 H(+). Catalyzes the phosphorylation of rifampicin, also known as rifampin (RIF), leading to its inactivation. This is Rifampicin phosphotransferase from Bacillus subtilis (strain 168).